Here is a 144-residue protein sequence, read N- to C-terminus: Large ribosomal subunit protein uL13 (144 aa).

Residues 125 to 144 are disordered; it reads YRGPEHPHQAQKPQPLEVKA.

The protein belongs to the universal ribosomal protein uL13 family. As to quaternary structure, part of the 50S ribosomal subunit.

Functionally, this protein is one of the early assembly proteins of the 50S ribosomal subunit, although it is not seen to bind rRNA by itself. It is important during the early stages of 50S assembly. This Aquifex aeolicus (strain VF5) protein is Large ribosomal subunit protein uL13.